A 288-amino-acid chain; its full sequence is Large ribosomal subunit protein uL2 (288 aa).

The segment at 232-265 (GTAMNPVDHPHGGGEGKTKGKHPESPWGWKTKGY) is disordered. Residues 239-255 (DHPHGGGEGKTKGKHPE) show a composition bias toward basic and acidic residues.

Belongs to the universal ribosomal protein uL2 family. As to quaternary structure, part of the 50S ribosomal subunit. Forms a bridge to the 30S subunit in the 70S ribosome.

Functionally, one of the primary rRNA binding proteins. Required for association of the 30S and 50S subunits to form the 70S ribosome, for tRNA binding and peptide bond formation. It has been suggested to have peptidyltransferase activity; this is somewhat controversial. Makes several contacts with the 16S rRNA in the 70S ribosome. This chain is Large ribosomal subunit protein uL2, found in Hydrogenobaculum sp. (strain Y04AAS1).